Here is a 171-residue protein sequence, read N- to C-terminus: Large ribosomal subunit protein uL10 (171 aa).

This sequence belongs to the universal ribosomal protein uL10 family. As to quaternary structure, part of the ribosomal stalk of the 50S ribosomal subunit. The N-terminus interacts with L11 and the large rRNA to form the base of the stalk. The C-terminus forms an elongated spine to which L12 dimers bind in a sequential fashion forming a multimeric L10(L12)X complex.

Functionally, forms part of the ribosomal stalk, playing a central role in the interaction of the ribosome with GTP-bound translation factors. The polypeptide is Large ribosomal subunit protein uL10 (Corynebacterium diphtheriae (strain ATCC 700971 / NCTC 13129 / Biotype gravis)).